Here is a 464-residue protein sequence, read N- to C-terminus: Siroheme synthase (464 aa).

Residues 1–203 (MDYLPLFHNL…GQETEAERLL (203 aa)) form a precorrin-2 dehydrogenase /sirohydrochlorin ferrochelatase region. NAD(+) is bound by residues 22-23 (EI) and 43-44 (PQ). Serine 128 is modified (phosphoserine). Positions 216-464 (GEVYLVGAGP…AWFEGRQSAD (249 aa)) are uroporphyrinogen-III C-methyltransferase. Proline 225 provides a ligand contact to S-adenosyl-L-methionine. The active-site Proton acceptor is aspartate 248. Lysine 270 functions as the Proton donor in the catalytic mechanism. S-adenosyl-L-methionine-binding positions include 301–303 (GGD), isoleucine 306, 331–332 (TA), methionine 383, and glycine 412.

It in the N-terminal section; belongs to the precorrin-2 dehydrogenase / sirohydrochlorin ferrochelatase family. In the C-terminal section; belongs to the precorrin methyltransferase family.

The enzyme catalyses uroporphyrinogen III + 2 S-adenosyl-L-methionine = precorrin-2 + 2 S-adenosyl-L-homocysteine + H(+). The catalysed reaction is precorrin-2 + NAD(+) = sirohydrochlorin + NADH + 2 H(+). It catalyses the reaction siroheme + 2 H(+) = sirohydrochlorin + Fe(2+). The protein operates within cofactor biosynthesis; adenosylcobalamin biosynthesis; precorrin-2 from uroporphyrinogen III: step 1/1. It functions in the pathway cofactor biosynthesis; adenosylcobalamin biosynthesis; sirohydrochlorin from precorrin-2: step 1/1. It participates in porphyrin-containing compound metabolism; siroheme biosynthesis; precorrin-2 from uroporphyrinogen III: step 1/1. Its pathway is porphyrin-containing compound metabolism; siroheme biosynthesis; siroheme from sirohydrochlorin: step 1/1. The protein operates within porphyrin-containing compound metabolism; siroheme biosynthesis; sirohydrochlorin from precorrin-2: step 1/1. Its function is as follows. Multifunctional enzyme that catalyzes the SAM-dependent methylations of uroporphyrinogen III at position C-2 and C-7 to form precorrin-2 via precorrin-1. Then it catalyzes the NAD-dependent ring dehydrogenation of precorrin-2 to yield sirohydrochlorin. Finally, it catalyzes the ferrochelation of sirohydrochlorin to yield siroheme. In Azotobacter vinelandii (strain DJ / ATCC BAA-1303), this protein is Siroheme synthase.